The sequence spans 552 residues: Dihydroxy-acid dehydratase (552 aa).

Asp-78 serves as a coordination point for Mg(2+). Cys-119 contributes to the [2Fe-2S] cluster binding site. Residues Asp-120 and Lys-121 each coordinate Mg(2+). Lys-121 carries the N6-carboxylysine modification. Cys-190 provides a ligand contact to [2Fe-2S] cluster. Mg(2+) is bound at residue Glu-441. The Proton acceptor role is filled by Ser-467.

It belongs to the IlvD/Edd family. Homodimer. It depends on [2Fe-2S] cluster as a cofactor. The cofactor is Mg(2+).

The enzyme catalyses (2R)-2,3-dihydroxy-3-methylbutanoate = 3-methyl-2-oxobutanoate + H2O. It carries out the reaction (2R,3R)-2,3-dihydroxy-3-methylpentanoate = (S)-3-methyl-2-oxopentanoate + H2O. It participates in amino-acid biosynthesis; L-isoleucine biosynthesis; L-isoleucine from 2-oxobutanoate: step 3/4. It functions in the pathway amino-acid biosynthesis; L-valine biosynthesis; L-valine from pyruvate: step 3/4. Its function is as follows. Functions in the biosynthesis of branched-chain amino acids. Catalyzes the dehydration of (2R,3R)-2,3-dihydroxy-3-methylpentanoate (2,3-dihydroxy-3-methylvalerate) into 2-oxo-3-methylpentanoate (2-oxo-3-methylvalerate) and of (2R)-2,3-dihydroxy-3-methylbutanoate (2,3-dihydroxyisovalerate) into 2-oxo-3-methylbutanoate (2-oxoisovalerate), the penultimate precursor to L-isoleucine and L-valine, respectively. This is Dihydroxy-acid dehydratase from Ignicoccus hospitalis (strain KIN4/I / DSM 18386 / JCM 14125).